Consider the following 516-residue polypeptide: Importin subunit alpha-B (516 aa).

The segment covering 1–29 (MQRSKQETRKSQYKKSIDSDESRRKREEA) has biased composition (basic and acidic residues). The tract at residues 1-54 (MQRSKQETRKSQYKKSIDSDESRRKREEASLSIRKNKREESLLKKRTQAVPGST) is disordered. Positions 1-55 (MQRSKQETRKSQYKKSIDSDESRRKREEASLSIRKNKREESLLKKRTQAVPGSTP) constitute an IBB domain. ARM repeat units follow at residues 55 to 96 (PVKV…KLLS), 100 to 140 (SPPI…NIAS), 143 to 182 (PEQT…NIAG), 185 to 227 (HYCR…NFCR), 229 to 268 (KPQP…YLSD), 271 to 310 (NERI…NIVT), 313 to 352 (DNQT…NITA), 355 to 394 (KNQI…NATS), and 398 to 437 (PQQI…NILV). The disordered stretch occupies residues 490–516 (EQEDEGDLMPEGSSFSFSNQTNSNFNL). Positions 502–516 (SSFSFSNQTNSNFNL) are enriched in low complexity.

This sequence belongs to the importin alpha family. As to quaternary structure, forms a complex with tnpo/importin subunit beta.

It localises to the cytoplasm. It is found in the nucleus envelope. Functionally, functions in nuclear protein import via a substrate-importin alpha-beta transport complex that passes though the nuclear pore complexes (NPC). Binds specifically and directly to substrates containing either a simple or bipartite NLS motif. This chain is Importin subunit alpha-B, found in Dictyostelium discoideum (Social amoeba).